Reading from the N-terminus, the 540-residue chain is Chaperonin GroEL (540 aa).

ATP-binding positions include 29–32 (TIGP), 86–90 (DGTTT), glycine 413, 477–479 (NAA), and aspartate 493.

Belongs to the chaperonin (HSP60) family. As to quaternary structure, forms a cylinder of 14 subunits composed of two heptameric rings stacked back-to-back. Interacts with the co-chaperonin GroES.

It is found in the cytoplasm. The enzyme catalyses ATP + H2O + a folded polypeptide = ADP + phosphate + an unfolded polypeptide.. In terms of biological role, together with its co-chaperonin GroES, plays an essential role in assisting protein folding. The GroEL-GroES system forms a nano-cage that allows encapsulation of the non-native substrate proteins and provides a physical environment optimized to promote and accelerate protein folding. This is Chaperonin GroEL from Lactobacillus helveticus (strain DPC 4571).